The chain runs to 40 residues: Large ribosomal subunit protein bL33c (40 aa).

The protein belongs to the bacterial ribosomal protein bL33 family.

It is found in the plastid. It localises to the chloroplast. This is Large ribosomal subunit protein bL33c (rpl33) from Pisum sativum (Garden pea).